The chain runs to 214 residues: Probable transaldolase (214 aa).

The active-site Schiff-base intermediate with substrate is Lys83.

Belongs to the transaldolase family. Type 3B subfamily.

The protein resides in the cytoplasm. The catalysed reaction is D-sedoheptulose 7-phosphate + D-glyceraldehyde 3-phosphate = D-erythrose 4-phosphate + beta-D-fructose 6-phosphate. It participates in carbohydrate degradation; pentose phosphate pathway; D-glyceraldehyde 3-phosphate and beta-D-fructose 6-phosphate from D-ribose 5-phosphate and D-xylulose 5-phosphate (non-oxidative stage): step 2/3. Transaldolase is important for the balance of metabolites in the pentose-phosphate pathway. The protein is Probable transaldolase of Clostridium tetani (strain Massachusetts / E88).